The following is a 120-amino-acid chain: MTNLAVKYKQQAQEEVQIQTPPQQMAKPKVKAKITRIEKLLYVAFIGFLLYACVAFIGNKAGLYQVNVEAATIEEKIVQQQKENQELQAEVEKLSRYERIAEVAKKHGLEINANNVKGLK.

The Cytoplasmic segment spans residues 1-36 (MTNLAVKYKQQAQEEVQIQTPPQQMAKPKVKAKITR). A helical transmembrane segment spans residues 37–57 (IEKLLYVAFIGFLLYACVAFI). The Extracellular segment spans residues 58–120 (GNKAGLYQVN…INANNVKGLK (63 aa)).

It belongs to the FtsL family.

The protein localises to the cell membrane. Essential cell division protein. In Bacillus cereus (strain ATCC 14579 / DSM 31 / CCUG 7414 / JCM 2152 / NBRC 15305 / NCIMB 9373 / NCTC 2599 / NRRL B-3711), this protein is Cell division protein FtsL.